A 565-amino-acid polypeptide reads, in one-letter code: NAD-dependent malic enzyme (565 aa).

Tyr104 acts as the Proton donor in catalysis. Arg157 contacts NAD(+). Residue Lys175 is the Proton acceptor of the active site. The a divalent metal cation site is built by Glu246, Asp247, and Asp270. Residues Asp270 and Asn418 each coordinate NAD(+).

The protein belongs to the malic enzymes family. In terms of assembly, homotetramer. Mg(2+) is required as a cofactor. The cofactor is Mn(2+).

The catalysed reaction is (S)-malate + NAD(+) = pyruvate + CO2 + NADH. The enzyme catalyses oxaloacetate + H(+) = pyruvate + CO2. The polypeptide is NAD-dependent malic enzyme (Escherichia coli O157:H7).